Consider the following 30-residue polypeptide: Thaumatin-like protein (30 aa).

It belongs to the thaumatin family.

It localises to the secreted. Its function is as follows. Has antifungal activity against C.comatus, F.oxysporum and P.ostreatus. In Phaseolus vulgaris (Kidney bean), this protein is Thaumatin-like protein.